A 304-amino-acid polypeptide reads, in one-letter code: Thyroxine 5-deiodinase (304 aa).

The tract at residues 1–22 is disordered; sequence MPRQAASRLVVGEGEGPPGASG. Over 1 to 44 the chain is Cytoplasmic; the sequence is MPRQAASRLVVGEGEGPPGASGPAATMLRSLLLHSLRLCAQTAS. The helical; Signal-anchor for type II membrane protein transmembrane segment at 45-67 threads the bilayer; that stretch reads CLVLFPRFLGTAFMLWLLDFLCI. The Extracellular portion of the chain corresponds to 68–304; that stretch reads RKHFLRRRHP…QLHGTRPHRF (237 aa). U170 is a catalytic residue. Residue U170 is a non-standard amino acid, selenocysteine.

This sequence belongs to the iodothyronine deiodinase family. As to quaternary structure, monomer. Homodimer. May undergo minor heretodimerization with DIO1 and DIO2.

It localises to the cell membrane. The protein resides in the endosome membrane. It carries out the reaction 3,3',5'-triiodo-L-thyronine + iodide + A + H(+) = L-thyroxine + AH2. The catalysed reaction is 3,3'-diiodo-L-thyronine + iodide + A + H(+) = 3,3',5-triiodo-L-thyronine + AH2. It catalyses the reaction 3-iodo-L-thyronine + iodide + A + H(+) = 3,5-diiodo-L-thyronine + AH2. The enzyme catalyses L-thyronine + iodide + A + H(+) = 3-iodo-L-thyronine + AH2. It carries out the reaction 3',5'-diiodo-L-thyronine + iodide + A + H(+) = 3,3',5'-triiodo-L-thyronine + AH2. The catalysed reaction is 3'-iodo-L-thyronine + iodide + A + H(+) = 3,3'-diiodo-L-thyronine + AH2. It catalyses the reaction 3,3',5'-triiodothyronamine + iodide + A + H(+) = 3,3',5,5'-tetraiodothyronamine + AH2. The enzyme catalyses 3',5'-diiodothyronamine + iodide + A + H(+) = 3,3',5'-triiodothyronamine + AH2. It carries out the reaction 3,3'-diiodothyronamine + iodide + A + H(+) = 3,3',5-triiodothyronamine + AH2. The catalysed reaction is 3-iodothyronamine + iodide + A + H(+) = 3,5-diiodothyronamine + AH2. It catalyses the reaction 3'-iodothyronamine + iodide + A + H(+) = 3,3'-diiodothyronamine + AH2. The enzyme catalyses thyronamine + iodide + A + H(+) = 3-iodothyronamine + AH2. Plays a crucial role in the metabolism of thyroid hormones (TH) and has specific roles in TH activation and inactivation by deiodination. Catalyzes the deiodination of L-thyroxine (T4) to 3,3',5'-triiodothyronine (rT3), 3,5,3'-triiodothyronine (T3) to 3,3'-diiodothyronine (3,3'-T2), 3,5-diiodothyronine (3,5-T2) to 3-monoiodothyronine (3-T1), rT3 to 3',5'-diiodothyronine (3',5'-T2) and 3,3'-T2 to 3'-monoiodothyronine (3'-T1) via inner-ring deiodination (IRD). Catalyzes the deiodination of 3-T1 to L-thyronine (T0) via outer-ring deiodination (ORD). Catalyzes the tyrosyl ring deiodinations of 3,3',5,5'-tetraiodothyronamine, 3,3',5'-triiodothyronamine, 3,5,3'-triiodothyronamine, 3,5-diiodothyronamine, 3,3'-diiodothyronamine and 3-iodothyronamine. The protein is Thyroxine 5-deiodinase (Dio3) of Mus musculus (Mouse).